A 202-amino-acid chain; its full sequence is Small ribosomal subunit protein uS4 (202 aa).

The interval 18–44 (LPGLTRKSARREYPPGQHGQGRRKRSE) is disordered. In terms of domain architecture, S4 RNA-binding spans 90–152 (MRLDNTVFRL…DRSRKLIEAN (63 aa)).

The protein belongs to the universal ribosomal protein uS4 family. As to quaternary structure, part of the 30S ribosomal subunit. Contacts protein S5. The interaction surface between S4 and S5 is involved in control of translational fidelity.

In terms of biological role, one of the primary rRNA binding proteins, it binds directly to 16S rRNA where it nucleates assembly of the body of the 30S subunit. Functionally, with S5 and S12 plays an important role in translational accuracy. This is Small ribosomal subunit protein uS4 from Picosynechococcus sp. (strain ATCC 27264 / PCC 7002 / PR-6) (Agmenellum quadruplicatum).